The primary structure comprises 479 residues: Dynein regulatory complex subunit 4 (479 aa).

Coiled coils occupy residues 28–93 (RDQL…LADI), 117–170 (RAEA…FNEK), and 210–347 (EVEE…GLKE).

This sequence belongs to the DRC4 family.

The protein localises to the cytoplasm. The protein resides in the cytoskeleton. It is found in the flagellum basal body. Functionally, cytoskeletal linker which probably functions in axonemal and non-axonemal dynein regulation. May play a role in the spermatozoa motility. This chain is Dynein regulatory complex subunit 4, found in Drosophila melanogaster (Fruit fly).